Here is a 66-residue protein sequence, read N- to C-terminus: Beta-mammal toxin Co1 (66 aa).

Residues 1-66 (KEGYLVNHST…VWPLPKKTCN (66 aa)) form the LCN-type CS-alpha/beta domain. Intrachain disulfides connect Cys-12-Cys-65, Cys-16-Cys-41, Cys-25-Cys-46, and Cys-29-Cys-48.

In terms of tissue distribution, expressed by the venom gland.

The protein resides in the secreted. In terms of biological role, beta toxins bind voltage-independently at site-4 of sodium channels (Nav) and shift the voltage of activation toward more negative potentials thereby affecting sodium channel activation and promoting spontaneous and repetitive firing. This toxin acts on human Nav1.6/SCN8A voltage-gated sodium channels. In vivo, is lethal to mice 40 minutes after intraperitoneal injection at a dose of 5ug. No activity is observed when injected into crickets or woodlice. This is Beta-mammal toxin Co1 from Centruroides ornatus (Scorpion).